Consider the following 60-residue polypeptide: DNA-directed RNA polymerase subunit Rpo6 (60 aa).

It belongs to the archaeal Rpo6/eukaryotic RPB6 RNA polymerase subunit family. Part of the RNA polymerase complex.

It localises to the cytoplasm. The catalysed reaction is RNA(n) + a ribonucleoside 5'-triphosphate = RNA(n+1) + diphosphate. In terms of biological role, DNA-dependent RNA polymerase (RNAP) catalyzes the transcription of DNA into RNA using the four ribonucleoside triphosphates as substrates. The protein is DNA-directed RNA polymerase subunit Rpo6 of Methanosarcina acetivorans (strain ATCC 35395 / DSM 2834 / JCM 12185 / C2A).